Here is a 210-residue protein sequence, read N- to C-terminus: DNA-directed RNA polymerase subunit 5-like protein 1 (210 aa).

This sequence belongs to the archaeal Rpo5/eukaryotic RPB5 RNA polymerase subunit family.

It localises to the nucleus. This is DNA-directed RNA polymerase subunit 5-like protein 1 (NRPB5L1) from Arabidopsis thaliana (Mouse-ear cress).